A 242-amino-acid chain; its full sequence is Eukaryotic translation initiation factor 4E type 1B (242 aa).

The tract at residues 1-42 (MLAVEVSEAEGGIREWEEEEKEEEAAERTPTGEKSPNSPRTL) is disordered. Positions 16-25 (WEEEEKEEEA) are enriched in acidic residues. Residues 32–41 (GEKSPNSPRT) are compositionally biased toward polar residues. Residues 62–65 (HPLQ) form an EIF4EBP1/2/3 binding region. MRNA is bound at residue 81–82 (WQ). Residues 98–102 (WALYS) are EIF4EBP1/2/3 binding. Residue 127–128 (WE) participates in mRNA binding. The EIF4EBP1/2/3 binding stretch occupies residues 157–164 (ETLLCLIG). Residues 182–187 (RTKGDK) and 230–232 (TKS) each bind mRNA.

The protein belongs to the eukaryotic initiation factor 4E family. In terms of assembly, eIF4F is a multi-subunit complex, the composition of which varies with external and internal environmental conditions. It is composed of at least EIF4A, EIF4E and EIF4G.

In terms of biological role, recognizes and binds the 7-methylguanosine-containing mRNA cap during an early step in the initiation of protein synthesis and facilitates ribosome binding by inducing the unwinding of the mRNAs secondary structure. This Homo sapiens (Human) protein is Eukaryotic translation initiation factor 4E type 1B (EIF4E1B).